The primary structure comprises 174 residues: Ribulose bisphosphate carboxylase small subunit, chloroplastic (174 aa).

The transit peptide at 1 to 45 (MAPTVMASSATSVAPFQGLKSTAGLPVSRRSNASSASVSNGGRIR) directs the protein to the chloroplast.

The protein belongs to the RuBisCO small chain family. In terms of assembly, heterohexadecamer of 8 large and 8 small subunits.

The protein resides in the plastid. Its subcellular location is the chloroplast. In terms of biological role, ruBisCO catalyzes two reactions: the carboxylation of D-ribulose 1,5-bisphosphate, the primary event in carbon dioxide fixation, as well as the oxidative fragmentation of the pentose substrate. Both reactions occur simultaneously and in competition at the same active site. Although the small subunit is not catalytic it is essential for maximal activity. The protein is Ribulose bisphosphate carboxylase small subunit, chloroplastic of Hordeum vulgare (Barley).